Here is a 219-residue protein sequence, read N- to C-terminus: uncharacterized protein (219 aa).

In terms of domain architecture, RRM spans 30–107 (FRLFVGNLGN…RPVKLSRATS (78 aa)). Residues 140–149 (KKIKNKHGKN) are compositionally biased toward basic residues. Residues 140 to 219 (KKIKNKHGKN…YSRASSFRRV (80 aa)) are disordered. A compositionally biased stretch (low complexity) spans 150-169 (SSKSSRAAQSAAAELISSSS). Residues 176–186 (ANSTSVPNAVN) are compositionally biased toward polar residues.

This is an uncharacterized protein from Schizosaccharomyces pombe (strain 972 / ATCC 24843) (Fission yeast).